Consider the following 501-residue polypeptide: L-arabinose isomerase (501 aa).

Mn(2+)-binding residues include Glu306, Glu333, His350, and His450.

This sequence belongs to the arabinose isomerase family. Homohexamer. It depends on Mn(2+) as a cofactor.

The catalysed reaction is beta-L-arabinopyranose = L-ribulose. It participates in carbohydrate degradation; L-arabinose degradation via L-ribulose; D-xylulose 5-phosphate from L-arabinose (bacterial route): step 1/3. Catalyzes the conversion of L-arabinose to L-ribulose. The polypeptide is L-arabinose isomerase (Serratia proteamaculans (strain 568)).